The primary structure comprises 298 residues: Peroxisomal 2,4-dienoyl-CoA reductase [(3E)-enoyl-CoA-producing] (298 aa).

An NADP(+)-binding site is contributed by 19–24 (GGGSGI). Arg44 contributes to the substrate binding site. Residue Asp69 coordinates NADP(+). Substrate is bound by residues Arg71, Phe101, and 109–111 (SPN). Residues Lys173 and 200 to 206 (PGPIGGT) contribute to the NADP(+) site. The interval 279–298 (SRAVEKRSRAKPVGLPTSKL) is disordered. Positions 296 to 298 (SKL) match the Microbody targeting signal motif.

Belongs to the short-chain dehydrogenases/reductases (SDR) family. 2,4-dienoyl-CoA reductase subfamily.

Its subcellular location is the peroxisome. The enzyme catalyses a (2E,4Z)-dienoyl-CoA + NADPH + H(+) = a 4,5-saturated-(3E)-enoyl-CoA + NADP(+). It catalyses the reaction a (2E,4E)-dienoyl-CoA + NADPH + H(+) = a 4,5-saturated-(3E)-enoyl-CoA + NADP(+). Functionally, auxiliary enzyme of beta-oxidation. Participates in the degradation of unsaturated fatty enoyl-CoA esters having double bonds in both even- and odd-numbered positions in peroxisome. Catalyzes the NADP-dependent reduction of 2,4-dienoyl-CoA to yield trans-3-enoyl-CoA. This Arabidopsis thaliana (Mouse-ear cress) protein is Peroxisomal 2,4-dienoyl-CoA reductase [(3E)-enoyl-CoA-producing].